Consider the following 1420-residue polypeptide: DNA-directed RNA polymerase subunit beta' (1420 aa).

Residues Cys-71, Cys-73, Cys-86, and Cys-89 each coordinate Zn(2+). Residues Asp-461, Asp-463, and Asp-465 each contribute to the Mg(2+) site. Cys-815, Cys-889, Cys-896, and Cys-899 together coordinate Zn(2+).

Belongs to the RNA polymerase beta' chain family. In terms of assembly, the RNAP catalytic core consists of 2 alpha, 1 beta, 1 beta' and 1 omega subunit. When a sigma factor is associated with the core the holoenzyme is formed, which can initiate transcription. Requires Mg(2+) as cofactor. Zn(2+) is required as a cofactor.

The enzyme catalyses RNA(n) + a ribonucleoside 5'-triphosphate = RNA(n+1) + diphosphate. In terms of biological role, DNA-dependent RNA polymerase catalyzes the transcription of DNA into RNA using the four ribonucleoside triphosphates as substrates. The sequence is that of DNA-directed RNA polymerase subunit beta' from Histophilus somni (strain 2336) (Haemophilus somnus).